The primary structure comprises 51 residues: MYSRGSFFKSRVTLPTLVGAYMWEFELPYLTDKRHISYSAPSVATFSLVSR.

This is an uncharacterized protein from Grapevine leafroll-associated virus 3 (isolate United States/NY1) (GLRaV-3).